The chain runs to 329 residues: CDP-6-deoxy-L-threo-D-glycero-4-hexulose-3-dehydrase reductase (329 aa).

Residues Ser-2–Leu-93 form the 2Fe-2S ferredoxin-type domain. Cys-37, Cys-42, Cys-45, and Cys-75 together coordinate [2Fe-2S] cluster. The region spanning Lys-98–Arg-197 is the FAD-binding FR-type domain.

As to quaternary structure, monomer.

Its pathway is nucleotide-sugar biosynthesis; CDP-ascarylose biosynthesis. The protein operates within bacterial outer membrane biogenesis; lipopolysaccharide biosynthesis. Participates in the conversion of CDP-6-deoxy-D-glycero-L-threo-4-hexulose to 3,6-dideoxy-D-glycero-D-glycero-4-hexulose together with CDP-6-deoxy-D-glycero-L-threo-4-hexulose-3-dehydrase (E1) in two consecutive steps. The detailed mechanism of E3 is not yet resolved. The polypeptide is CDP-6-deoxy-L-threo-D-glycero-4-hexulose-3-dehydrase reductase (ascD) (Yersinia pestis).